Reading from the N-terminus, the 225-residue chain is Uridylate kinase (225 aa).

9–10 (GS) is a binding site for ATP. Glycine 43 lines the UMP pocket. 2 residues coordinate ATP: glycine 44 and arginine 48. Residues aspartate 65 and 113-119 (TEPAHST) contribute to the UMP site. ATP is bound by residues threonine 139, tyrosine 145, and aspartate 148.

Belongs to the UMP kinase family. In terms of assembly, homohexamer.

Its subcellular location is the cytoplasm. The enzyme catalyses UMP + ATP = UDP + ADP. The protein operates within pyrimidine metabolism; CTP biosynthesis via de novo pathway; UDP from UMP (UMPK route): step 1/1. Inhibited by UTP. Its function is as follows. Catalyzes the reversible phosphorylation of UMP to UDP. This chain is Uridylate kinase, found in Methanobrevibacter smithii (strain ATCC 35061 / DSM 861 / OCM 144 / PS).